The primary structure comprises 248 residues: 4-hydroxy-tetrahydrodipicolinate reductase (248 aa).

Asp28 lines the NAD(+) pocket. An NADP(+)-binding site is contributed by Lys29. NAD(+) contacts are provided by residues 78-80 (ATT) and 102-105 (SYNM). Catalysis depends on His134, which acts as the Proton donor/acceptor. His135 is a binding site for (S)-2,3,4,5-tetrahydrodipicolinate. Lys138 serves as the catalytic Proton donor. (S)-2,3,4,5-tetrahydrodipicolinate is bound at residue 144-145 (GT).

This sequence belongs to the DapB family.

The protein localises to the cytoplasm. The catalysed reaction is (S)-2,3,4,5-tetrahydrodipicolinate + NAD(+) + H2O = (2S,4S)-4-hydroxy-2,3,4,5-tetrahydrodipicolinate + NADH + H(+). The enzyme catalyses (S)-2,3,4,5-tetrahydrodipicolinate + NADP(+) + H2O = (2S,4S)-4-hydroxy-2,3,4,5-tetrahydrodipicolinate + NADPH + H(+). Its pathway is amino-acid biosynthesis; L-lysine biosynthesis via DAP pathway; (S)-tetrahydrodipicolinate from L-aspartate: step 4/4. In terms of biological role, catalyzes the conversion of 4-hydroxy-tetrahydrodipicolinate (HTPA) to tetrahydrodipicolinate. This chain is 4-hydroxy-tetrahydrodipicolinate reductase, found in Exiguobacterium sibiricum (strain DSM 17290 / CCUG 55495 / CIP 109462 / JCM 13490 / 255-15).